A 198-amino-acid chain; its full sequence is 7-methyl-GTP pyrophosphatase (198 aa).

The active-site Proton acceptor is aspartate 72.

This sequence belongs to the Maf family. YceF subfamily. Requires a divalent metal cation as cofactor.

Its subcellular location is the cytoplasm. It catalyses the reaction N(7)-methyl-GTP + H2O = N(7)-methyl-GMP + diphosphate + H(+). In terms of biological role, nucleoside triphosphate pyrophosphatase that hydrolyzes 7-methyl-GTP (m(7)GTP). May have a dual role in cell division arrest and in preventing the incorporation of modified nucleotides into cellular nucleic acids. This Idiomarina loihiensis (strain ATCC BAA-735 / DSM 15497 / L2-TR) protein is 7-methyl-GTP pyrophosphatase.